The following is a 370-amino-acid chain: Prolactin-releasing peptide receptor (370 aa).

Residues 1–34 (MTSLPPGTTGDPDLFSGPSPAGSTPANQSAEASE) are disordered. At 1–62 (MTSLPPGTTG…LQLVHQLKGL (62 aa)) the chain is on the extracellular side. Residues 21–34 (AGSTPANQSAEASE) are compositionally biased toward polar residues. N-linked (GlcNAc...) asparagine glycans are attached at residues Asn-27 and Asn-36. Residues 63-83 (IVMLYSIVVVVGLVGNCLLVL) form a helical membrane-spanning segment. The Cytoplasmic segment spans residues 84 to 101 (VIARVRRLHNVTNFLIGN). Residues 102-122 (LALSDVLMCAACVPLTLAYAF) traverse the membrane as a helical segment. Residues 123-126 (EPRG) are Extracellular-facing. The helical transmembrane segment at 127-147 (WVFGGGLCHLVFFLQPVTVYV) threads the bilayer. Cysteines 134 and 211 form a disulfide. Over 148–175 (SVFTLTTIAVDRYVVLVHPLRRRISLKL) the chain is Cytoplasmic. A helical transmembrane segment spans residues 176–196 (SAYAVLGIWALSAVLALPAAV). The Extracellular segment spans residues 197 to 223 (HTYHVELKPHDVRLCEEFWGSQERQRQ). The chain crosses the membrane as a helical span at residues 224–244 (IYAWGLLLGTYLLPLLAILLS). Topologically, residues 245–276 (YVRVSVKLRNRVVPGSVTQSQADWDRARRRRT) are cytoplasmic. Residues 277–297 (FCLLVVVVVVFALCWLPLHIF) traverse the membrane as a helical segment. Topologically, residues 298-317 (NLLRDLDPRAIDPYAFGLVQ) are extracellular. Residues 318–338 (LLCHWLAMSSACYNPFIYAWL) form a helical membrane-spanning segment. At 339–370 (HDSFREELRKMLLSWPRKIVPHGQNMTVSVVI) the chain is on the cytoplasmic side. The segment at 365–370 (TVSVVI) is required for interaction with GRIP1, GRIP2 and PICK1.

This sequence belongs to the G-protein coupled receptor 1 family. As to quaternary structure, interacts through its C-terminal region with the PDZ domain-containing proteins GRIP1, GRIP2 and PICK1. Interacts with PDZ domains 4 and 5 of GRIP1 and with the PDZ domain of PICK1. In terms of tissue distribution, widely expressed, with highest levels in pituitary, cerebellum, and hypothalamus.

It is found in the cell membrane. Functionally, receptor for prolactin-releasing peptide (PrRP). Implicated in lactation, regulation of food intake and pain-signal processing. In Rattus norvegicus (Rat), this protein is Prolactin-releasing peptide receptor (Prlhr).